The chain runs to 284 residues: Bifunctional protein FolD (284 aa).

NADP(+)-binding positions include 166–168 (GAS) and I232.

It belongs to the tetrahydrofolate dehydrogenase/cyclohydrolase family. As to quaternary structure, homodimer.

The catalysed reaction is (6R)-5,10-methylene-5,6,7,8-tetrahydrofolate + NADP(+) = (6R)-5,10-methenyltetrahydrofolate + NADPH. It carries out the reaction (6R)-5,10-methenyltetrahydrofolate + H2O = (6R)-10-formyltetrahydrofolate + H(+). Its pathway is one-carbon metabolism; tetrahydrofolate interconversion. Catalyzes the oxidation of 5,10-methylenetetrahydrofolate to 5,10-methenyltetrahydrofolate and then the hydrolysis of 5,10-methenyltetrahydrofolate to 10-formyltetrahydrofolate. In Azotobacter vinelandii (strain DJ / ATCC BAA-1303), this protein is Bifunctional protein FolD.